Reading from the N-terminus, the 251-residue chain is uncharacterized protein (251 aa).

Positions 4–152 (IEITKDNIED…YFQLMALTWN (149 aa)) constitute an N-acetyltransferase domain.

This sequence belongs to the acetyltransferase family.

This is an uncharacterized protein from Bacillus subtilis (strain 168).